The sequence spans 434 residues: Fez family zinc finger protein 2 (434 aa).

An Engrailed homology 1 repressor motif is present at residues 27–42; the sequence is SLAFSIERIMAKTSEP. 6 C2H2-type zinc fingers span residues 253-275, 281-303, 309-331, 337-359, 365-387, and 393-416; these read FTCE…MPVH, FVCK…KIIH, HKCN…IRIH, FVCE…KLTH, YKCS…MHTH, and FTCA…RKLH.

Belongs to the krueppel C2H2-type zinc-finger protein family.

Its subcellular location is the nucleus. Its function is as follows. Transcription repressor. Component of the regulatory cascade that controls the development of dopaminergic (DA) and serotonergic (5HT) neurons. The chain is Fez family zinc finger protein 2 (fezf2) from Xenopus laevis (African clawed frog).